Reading from the N-terminus, the 428-residue chain is Probable protein phosphatase 2C 5 (428 aa).

One can recognise a PPM-type phosphatase domain in the interval 25-297; the sequence is RSEKVEKPFV…DDTTCVVVDI (273 aa). Mn(2+) contacts are provided by Asp-73, Gly-74, Asp-249, and Asp-288.

This sequence belongs to the PP2C family. Requires Mg(2+) as cofactor. It depends on Mn(2+) as a cofactor.

It catalyses the reaction O-phospho-L-seryl-[protein] + H2O = L-seryl-[protein] + phosphate. The enzyme catalyses O-phospho-L-threonyl-[protein] + H2O = L-threonyl-[protein] + phosphate. This is Probable protein phosphatase 2C 5 from Arabidopsis thaliana (Mouse-ear cress).